A 1262-amino-acid chain; its full sequence is MNTRFPSSKMVPFHFPPSKLALWNPMPIGECIYLHLSYYRKPKLMVTEKAIRLAYRHAKQNKKNVPCFLLGSLTVDEDEEGVTLTIDRFDPGREIPECLERTPTASLPGDFLIPCRVHIQGLGSRDVIVHNADDFSSALKALQYHVCSKDFLDCGKLLCLRAQITPRESLDGVDFNLQWTAVTLANSFKCVPVKPIPIIPTALARNLSSNLNISQVQGTYKHGYITMDETRKLLLLLQSDPKVSSLPLVGIWLAGIIHVYSPQVWACCLRYMFSSSIQERVFSESGNFIIVLYSLTHKEPEFYECLPCESRTPDLQFQLLTNKETLHLFNNVEPSGKNPIHFELSAESQDAEAEAEVLSKISKTLPVKRSSQKLSPGKIPINKHDTDLEDEDFSPRPIPSPHPVSQKISKVQPSVPELSLVLDNNFTESSNQSNPLEMMTVENPLLIKPSQPELCDAKHSSEATTGEPFRRGPTNQLSQDTALRQSRGKQSSTCKKESLQFRNTNAKPSLSVPSPDVAEKLQAVSAGSMQKEDYPVRPSTLDSRQPSLAPQAQPHNLVFSTHNSTRPMELQVPTPSLPSYYPTNVCSCCQHHGHIQYSTINSWQGNTVGSIQDLRSESLPKHAFFHSSGCPSLCPNAIYSSSSPVSMKQGGMGAYSPHSNGEPSPVAGPSHVDSCVPHPCAMCMHTPNTAPDNGMMGLSPDAYRFVTEQDRQLRLLQAQIQRLLEAQSLDPGSHKTVATVEDTVKAAKQMELVSMEAQSSPGLHMRKSVSIAVSTGASLFWNAAGDDQEPDSQPKQDDTKISSEDMNFSVDINNEATSLPGSASSLKAVDIPSFEESNLAVEEVNQPLPESNSSSEQSKEPGVPVFFPNALLAESVSMCLQTAPTEGASNSTELPQGTKDEPYRPSDNQKIYQDLLGQVNHLLSNASQETEEPPTKAVVTNRECAKTQNTHHARKKRHNSGLVDKDCVLSATIKQLRSLGVKIDSPTKVKKNEQKVDHASVLACISPEAVISGLNYMSFGNVGMSSLSPTGVDLSMEANAIALKYLSENQLSQLSLARSKQNNGDSSVGLLHINSDRSTVGLSLVSPSNMSFATKKYMKRYGLLQSSDNSEDEEEPPSHADSESDHVLNRNPACRPVQCGHEKEPSWNACEIAQCSDCGSADTRTDVPVLRNITNQAVQPRATEHLNEDSAISLRNLKPNPAMNLRTGKAEFTHHPEKENERDIAVFPGTLPSPETLKQMNSMDSVGTFLDVKRLRQLPKLF.

The segment at Met-1–Asn-992 is interaction with RBM14. The interval Tyr-220–Gly-762 is interaction with CPAP. 3 disordered regions span residues Arg-369–Ser-409, Leu-454–Gln-551, and Gly-650–Ser-670. 3 stretches are compositionally biased toward polar residues: residues Pro-473–Thr-493, Gln-500–Val-512, and Thr-540–Gln-551. Residues Pro-567–Ser-760 are PIN1-binding. Ser-733 and Ser-760 each carry phosphoserine. Disordered regions lie at residues Asn-782–Glu-804, Ala-883–Arg-904, Asn-925–Asn-959, and Ser-1106–Asn-1129. Residues Ser-792 to Ser-803 are compositionally biased toward basic and acidic residues. The segment covering Ala-883–Pro-895 has biased composition (polar residues). The segment covering Asn-949–Asn-959 has biased composition (basic residues). Ser-1110 carries the post-translational modification Phosphoserine. Basic and acidic residues predominate over residues Pro-1116–Leu-1128.

Homodimer. Interacts with PIN1 via its WW domain. This interaction is dependent on Stil mitotic phosphorylation. Interacts with CPAP. Interacts with RBM14 and this interaction interferes with the interaction of STIL with CPAP. Forms a complex with CPAP and SASS6. nteracts (via N-terminus) with CEP85; this interaction is essential for efficient centriolar targeting of STIL and subsequent PLK4 activation. Ubiquitinated. Post-translationally, phosphorylated following the activation of the mitotic checkpoint. In terms of tissue distribution, ubiquitously expressed in adult and fetal tissues. Highly expressed in hematopoietic tissues such as thymus, bone marrow and spleen.

It localises to the cytoplasm. It is found in the cytosol. The protein localises to the cytoskeleton. Its subcellular location is the microtubule organizing center. The protein resides in the centrosome. It localises to the centriole. It is found in the cell cortex. Its function is as follows. Immediate-early gene. Plays an important role in embryonic development as well as in cellular growth and proliferation; its long-term silencing affects cell survival and cell cycle distribution as well as decreases CDK1 activity correlated with reduced phosphorylation of CDK1. Plays a role as a positive regulator of the sonic hedgehog pathway, acting downstream of PTCH1. Plays an important role in the regulation of centriole duplication. Required for the onset of procentriole formation and proper mitotic progression. During procentriole formation, is essential for the correct loading of SASS6 and CPAP to the base of the procentriole to initiate procentriole assembly. In complex with STIL acts as a modulator of PLK4-driven cytoskeletal rearrangements and directional cell motility. The polypeptide is SCL-interrupting locus protein homolog (Stil) (Mus musculus (Mouse)).